Here is an 80-residue protein sequence, read N- to C-terminus: Large ribosomal subunit protein bL31 (80 aa).

The Zn(2+) site is built by cysteine 16, cysteine 18, cysteine 38, and cysteine 41.

Belongs to the bacterial ribosomal protein bL31 family. Type A subfamily. Part of the 50S ribosomal subunit. It depends on Zn(2+) as a cofactor.

Functionally, binds the 23S rRNA. This chain is Large ribosomal subunit protein bL31, found in Rhodococcus jostii (strain RHA1).